Here is a 383-residue protein sequence, read N- to C-terminus: PqqA peptide cyclase (383 aa).

Positions 11 to 226 (PGPPLWLLAE…TNQWREKLAA (216 aa)) constitute a Radical SAM core domain. Cysteine 25, cysteine 29, and cysteine 32 together coordinate [4Fe-4S] cluster.

Belongs to the radical SAM superfamily. PqqE family. As to quaternary structure, interacts with PqqD. The interaction is necessary for activity of PqqE. [4Fe-4S] cluster serves as cofactor.

It carries out the reaction [PQQ precursor protein] + S-adenosyl-L-methionine = E-Y cross-linked-[PQQ precursor protein] + 5'-deoxyadenosine + L-methionine + H(+). The protein operates within cofactor biosynthesis; pyrroloquinoline quinone biosynthesis. In terms of biological role, catalyzes the cross-linking of a glutamate residue and a tyrosine residue in the PqqA protein as part of the biosynthesis of pyrroloquinoline quinone (PQQ). This chain is PqqA peptide cyclase, found in Azotobacter vinelandii (strain DJ / ATCC BAA-1303).